The sequence spans 361 residues: RNA 3'-terminal phosphate cyclase (361 aa).

ATP contacts are provided by Q105, P132, Y295, D298, Q299, and H321. The active-site Tele-AMP-histidine intermediate is the H321.

Belongs to the RNA 3'-terminal cyclase family. Type 1 subfamily.

It localises to the nucleus. It is found in the nucleoplasm. It catalyses the reaction a 3'-end 3'-phospho-ribonucleotide-RNA + ATP = a 3'-end 2',3'-cyclophospho-ribonucleotide-RNA + AMP + diphosphate. Functionally, catalyzes the conversion of 3'-phosphate to a 2',3'-cyclic phosphodiester at the end of RNA. The mechanism of action of the enzyme occurs in 3 steps: (A) adenylation of the enzyme by ATP; (B) transfer of adenylate to an RNA-N3'P to produce RNA-N3'PP5'A; (C) and attack of the adjacent 2'-hydroxyl on the 3'-phosphorus in the diester linkage to produce the cyclic end product. Likely functions in some aspects of cellular RNA processing. Function plays an important role in a RNA repair and splicing pathway which controls axon regeneration in response to peripheral (PNS) and central nervous system (CNS) injury. In response to axotomy, negatively regulates splicing of Xbp1 which in turn activates downstream effectors which inhibit axon regeneration, including down-regulating the microtubule regulators ringer and futsch. This Drosophila melanogaster (Fruit fly) protein is RNA 3'-terminal phosphate cyclase.